Consider the following 109-residue polypeptide: uncharacterized protein (109 aa).

3 consecutive transmembrane segments (helical) span residues 7-27, 37-57, and 63-83; these read IITI…PFFV, YIRY…VVYC, and ILTG…LGLH.

It belongs to the AzlD/HI_1737/HP1330 family.

It localises to the cell membrane. This is an uncharacterized protein from Haemophilus influenzae (strain ATCC 51907 / DSM 11121 / KW20 / Rd).